The primary structure comprises 438 residues: Aspartate--tRNA(Asp/Asn) ligase (438 aa).

Position 176 (E176) interacts with L-aspartate. An aspartate region spans residues 198 to 201 (QLYK). Residue R220 participates in L-aspartate binding. ATP contacts are provided by residues 220 to 222 (RAE), 228 to 230 (RHL), and E361. Mg(2+) is bound by residues E361 and S364. L-aspartate is bound by residues S364 and R368. Residue 409 to 412 (GIER) participates in ATP binding.

It belongs to the class-II aminoacyl-tRNA synthetase family. Type 2 subfamily. As to quaternary structure, homodimer. The cofactor is Mg(2+).

It is found in the cytoplasm. It catalyses the reaction tRNA(Asx) + L-aspartate + ATP = L-aspartyl-tRNA(Asx) + AMP + diphosphate. Aspartyl-tRNA synthetase with relaxed tRNA specificity since it is able to aspartylate not only its cognate tRNA(Asp) but also tRNA(Asn). Reaction proceeds in two steps: L-aspartate is first activated by ATP to form Asp-AMP and then transferred to the acceptor end of tRNA(Asp/Asn). The protein is Aspartate--tRNA(Asp/Asn) ligase of Methanococcus aeolicus (strain ATCC BAA-1280 / DSM 17508 / OCM 812 / Nankai-3).